A 425-amino-acid chain; its full sequence is Trigger factor (425 aa).

The 74-residue stretch at Gly158 to Pro231 folds into the PPIase FKBP-type domain.

This sequence belongs to the FKBP-type PPIase family. Tig subfamily.

The protein resides in the cytoplasm. The enzyme catalyses [protein]-peptidylproline (omega=180) = [protein]-peptidylproline (omega=0). Its function is as follows. Involved in protein export. Acts as a chaperone by maintaining the newly synthesized protein in an open conformation. Functions as a peptidyl-prolyl cis-trans isomerase. This Thermotoga maritima (strain ATCC 43589 / DSM 3109 / JCM 10099 / NBRC 100826 / MSB8) protein is Trigger factor (tig).